A 157-amino-acid polypeptide reads, in one-letter code: Ribosome maturation factor RimP (157 aa).

This sequence belongs to the RimP family.

Its subcellular location is the cytoplasm. Functionally, required for maturation of 30S ribosomal subunits. This chain is Ribosome maturation factor RimP, found in Levilactobacillus brevis (strain ATCC 367 / BCRC 12310 / CIP 105137 / JCM 1170 / LMG 11437 / NCIMB 947 / NCTC 947) (Lactobacillus brevis).